The following is a 387-amino-acid chain: S-adenosylmethionine synthase (387 aa).

Position 17 (histidine 17) interacts with ATP. Aspartate 19 is a binding site for Mg(2+). Residue glutamate 45 coordinates K(+). L-methionine contacts are provided by glutamate 58 and glutamine 101. Positions glutamine 101–alanine 111 are flexible loop. ATP contacts are provided by residues aspartate 166–lysine 168, arginine 231–phenylalanine 232, aspartate 240, arginine 246–lysine 247, alanine 263, and lysine 267. An L-methionine-binding site is contributed by aspartate 240. Residue lysine 271 participates in L-methionine binding.

It belongs to the AdoMet synthase family. Homotetramer; dimer of dimers. Requires Mg(2+) as cofactor. K(+) serves as cofactor.

The protein resides in the cytoplasm. It carries out the reaction L-methionine + ATP + H2O = S-adenosyl-L-methionine + phosphate + diphosphate. Its pathway is amino-acid biosynthesis; S-adenosyl-L-methionine biosynthesis; S-adenosyl-L-methionine from L-methionine: step 1/1. Functionally, catalyzes the formation of S-adenosylmethionine (AdoMet) from methionine and ATP. The overall synthetic reaction is composed of two sequential steps, AdoMet formation and the subsequent tripolyphosphate hydrolysis which occurs prior to release of AdoMet from the enzyme. In Rhodospirillum centenum (strain ATCC 51521 / SW), this protein is S-adenosylmethionine synthase.